Reading from the N-terminus, the 871-residue chain is DNA mismatch repair protein MutS (871 aa).

625 to 632 (GPNMAGKS) contributes to the ATP binding site.

This sequence belongs to the DNA mismatch repair MutS family.

Functionally, this protein is involved in the repair of mismatches in DNA. It is possible that it carries out the mismatch recognition step. This protein has a weak ATPase activity. This Chlorobium limicola (strain DSM 245 / NBRC 103803 / 6330) protein is DNA mismatch repair protein MutS.